Here is a 428-residue protein sequence, read N- to C-terminus: Serine--tRNA ligase (428 aa).

231–233 is a binding site for L-serine; it reads TAE. 262 to 264 lines the ATP pocket; it reads RSE. Glu-285 contacts L-serine. 349–352 contacts ATP; that stretch reads EISS. Ser-385 lines the L-serine pocket.

This sequence belongs to the class-II aminoacyl-tRNA synthetase family. Type-1 seryl-tRNA synthetase subfamily. As to quaternary structure, homodimer. The tRNA molecule binds across the dimer.

It localises to the cytoplasm. It catalyses the reaction tRNA(Ser) + L-serine + ATP = L-seryl-tRNA(Ser) + AMP + diphosphate + H(+). The catalysed reaction is tRNA(Sec) + L-serine + ATP = L-seryl-tRNA(Sec) + AMP + diphosphate + H(+). It participates in aminoacyl-tRNA biosynthesis; selenocysteinyl-tRNA(Sec) biosynthesis; L-seryl-tRNA(Sec) from L-serine and tRNA(Sec): step 1/1. Its function is as follows. Catalyzes the attachment of serine to tRNA(Ser). Is also able to aminoacylate tRNA(Sec) with serine, to form the misacylated tRNA L-seryl-tRNA(Sec), which will be further converted into selenocysteinyl-tRNA(Sec). This Cellvibrio japonicus (strain Ueda107) (Pseudomonas fluorescens subsp. cellulosa) protein is Serine--tRNA ligase.